Consider the following 702-residue polypeptide: Flagellar operon control protein UmoB (702 aa).

5 consecutive transmembrane segments (helical) span residues 4-24 (SVII…FLFF), 204-224 (GFWN…ALMM), 227-247 (VFLP…LFLI), 343-363 (IIFV…QPLS), and 656-676 (GNTL…FFII).

The protein belongs to the IgaA family.

The protein resides in the cell inner membrane. Functionally, up-regulator of flagellar flhDC master operon. This Proteus mirabilis protein is Flagellar operon control protein UmoB (umoB).